A 591-amino-acid polypeptide reads, in one-letter code: Chaperone protein DnaK (591 aa).

Thr175 carries the phosphothreonine; by autocatalysis modification. A compositionally biased stretch (low complexity) spans 568 to 577 (AQAAEFANKQ). The interval 568-591 (AQAAEFANKQNESDPNNNSSEQNN) is disordered. The segment covering 580–591 (SDPNNNSSEQNN) has biased composition (polar residues).

The protein belongs to the heat shock protein 70 family.

In terms of biological role, acts as a chaperone. In Mycoplasma mycoides subsp. mycoides SC (strain CCUG 32753 / NCTC 10114 / PG1), this protein is Chaperone protein DnaK.